Consider the following 433-residue polypeptide: DNA methyltransferase 1-associated protein 1 (433 aa).

Positions 1 to 204 are required for nuclear localization; that stretch reads MSADVRDILD…EVVALLAKAK (204 aa). Residues 148-197 enclose the Myb-like domain; sequence NNWSKVQTDHLFDLARRFDLRFIVMADRWNRQQHGTKTVEELKERYYEVV. Residues 186 to 281 adopt a coiled-coil conformation; it reads VEELKERYYE…ADQQNEHASN (96 aa). The span at 252-264 shows a compositional bias: basic and acidic residues; the sequence is EARKKERERKTQD. Residues 252 to 305 form a disordered region; that stretch reads EARKKERERKTQDLQKLISQADQQNEHASNTPSTRKYEKKLHKKKVHQQPRPSR. The span at 268 to 285 shows a compositional bias: polar residues; the sequence is LISQADQQNEHASNTPST. Over residues 288 to 299 the composition is skewed to basic residues; sequence YEKKLHKKKVHQ.

In terms of assembly, interacts with Rel. Interacts with akirin and Bap55.

The protein localises to the nucleus. The protein resides in the cytoplasm. Functionally, involved in transcription repression and activation. Required for larvae and pupal development, and for normal innate immune responses. Involved in modulating the activation of the immune deficiency pathway (Imd), acting either downstream of, or at the level of, the NF-kappa-B factor Rel. Possibly functions with akirin to regulate Rel, and its interaction with the Brahma complex protein Bap55 suggests that it may regulate the IMD pathway at the level of chromatin remodeling. In Drosophila melanogaster (Fruit fly), this protein is DNA methyltransferase 1-associated protein 1.